Consider the following 252-residue polypeptide: tRNA pseudouridine synthase A (252 aa).

D52 functions as the Nucleophile in the catalytic mechanism. Y110 contacts substrate.

It belongs to the tRNA pseudouridine synthase TruA family. In terms of assembly, homodimer.

It carries out the reaction uridine(38/39/40) in tRNA = pseudouridine(38/39/40) in tRNA. Functionally, formation of pseudouridine at positions 38, 39 and 40 in the anticodon stem and loop of transfer RNAs. The chain is tRNA pseudouridine synthase A from Syntrophotalea carbinolica (strain DSM 2380 / NBRC 103641 / GraBd1) (Pelobacter carbinolicus).